A 601-amino-acid polypeptide reads, in one-letter code: NADH-quinone oxidoreductase subunit C/D (601 aa).

The segment at 1–191 (MKLTRDFPSN…DPFMLDAAKQ (191 aa)) is NADH dehydrogenase I subunit C. The segment at 215 to 601 (DYMFLNLGPN…IDFVMSDVDR (387 aa)) is NADH dehydrogenase I subunit D.

The protein in the N-terminal section; belongs to the complex I 30 kDa subunit family. This sequence in the C-terminal section; belongs to the complex I 49 kDa subunit family. In terms of assembly, NDH-1 is composed of 13 different subunits. Subunits NuoB, CD, E, F, and G constitute the peripheral sector of the complex.

The protein resides in the cell inner membrane. The enzyme catalyses a quinone + NADH + 5 H(+)(in) = a quinol + NAD(+) + 4 H(+)(out). Its function is as follows. NDH-1 shuttles electrons from NADH, via FMN and iron-sulfur (Fe-S) centers, to quinones in the respiratory chain. The immediate electron acceptor for the enzyme in this species is believed to be ubiquinone. Couples the redox reaction to proton translocation (for every two electrons transferred, four hydrogen ions are translocated across the cytoplasmic membrane), and thus conserves the redox energy in a proton gradient. The polypeptide is NADH-quinone oxidoreductase subunit C/D (Aeromonas salmonicida (strain A449)).